Here is a 361-residue protein sequence, read N- to C-terminus: Chorismate synthase (361 aa).

Arg48 and Arg54 together coordinate NADP(+). Residues 125-127 (RSS), 238-239 (NA), Gly278, 293-297 (KPTSS), and Arg319 contribute to the FMN site.

The protein belongs to the chorismate synthase family. As to quaternary structure, homotetramer. It depends on FMNH2 as a cofactor.

The catalysed reaction is 5-O-(1-carboxyvinyl)-3-phosphoshikimate = chorismate + phosphate. It functions in the pathway metabolic intermediate biosynthesis; chorismate biosynthesis; chorismate from D-erythrose 4-phosphate and phosphoenolpyruvate: step 7/7. In terms of biological role, catalyzes the anti-1,4-elimination of the C-3 phosphate and the C-6 proR hydrogen from 5-enolpyruvylshikimate-3-phosphate (EPSP) to yield chorismate, which is the branch point compound that serves as the starting substrate for the three terminal pathways of aromatic amino acid biosynthesis. This reaction introduces a second double bond into the aromatic ring system. This chain is Chorismate synthase, found in Escherichia coli (strain SE11).